The chain runs to 593 residues: DNA topoisomerase I, mitochondrial (593 aa).

Residues 1 to 43 (MLLLWLRALCRRFQHVPRRVPSRQVSRGSKASRAGWGETSKSS) constitute a mitochondrion transit peptide. Interaction with DNA regions lie at residues 254-255 (KY), 317-322 (RTGNEK), and 414-416 (TAK). The Topo IB-type catalytic domain maps to 261–593 (SSKPKGEMDW…FNQAGEDFEF (333 aa)). The active-site O-(3'-phospho-DNA)-tyrosine intermediate is Tyr551.

This sequence belongs to the type IB topoisomerase family. Ca(2+) serves as cofactor. Mg(2+) is required as a cofactor.

It localises to the mitochondrion. It carries out the reaction ATP-independent breakage of single-stranded DNA, followed by passage and rejoining.. Releases the supercoiling and torsional tension of DNA introduced during duplication of mitochondrial DNA by transiently cleaving and rejoining one strand of the DNA duplex. Introduces a single-strand break via transesterification at a target site in duplex DNA. The scissile phosphodiester is attacked by the catalytic tyrosine of the enzyme, resulting in the formation of a DNA-(3'-phosphotyrosyl)-enzyme intermediate and the expulsion of a 5'-OH DNA strand. The free DNA strand then rotates around the intact phosphodiester bond on the opposing strand, thus removing DNA supercoils. Finally, in the religation step, the DNA 5'-OH attacks the covalent intermediate to expel the active-site tyrosine and restore the DNA phosphodiester backbone. The polypeptide is DNA topoisomerase I, mitochondrial (Top1mt) (Rattus norvegicus (Rat)).